Reading from the N-terminus, the 71-residue chain is MIPVRCFTCGKVISEVWEEYKARVEERKMNLQHGEVLKVGDILDDLGVERYCCRRMLLSHVELVDVLAPYQ.

Residues Cys6, Cys9, Cys52, and Cys53 each contribute to the Zn(2+) site.

Belongs to the archaeal Rpo10/eukaryotic RPB10 RNA polymerase subunit family. Part of the RNA polymerase complex. The cofactor is Zn(2+).

The protein localises to the cytoplasm. The catalysed reaction is RNA(n) + a ribonucleoside 5'-triphosphate = RNA(n+1) + diphosphate. In terms of biological role, DNA-dependent RNA polymerase (RNAP) catalyzes the transcription of DNA into RNA using the four ribonucleoside triphosphates as substrates. This Methanocella arvoryzae (strain DSM 22066 / NBRC 105507 / MRE50) protein is DNA-directed RNA polymerase subunit Rpo10.